The following is a 345-amino-acid chain: Transcription initiation factor IIB (345 aa).

A TFIIB-type zinc finger spans residues 8–40; that stretch reads VGRNCPHCSAVDSLQTDDVMGEVACTACALVVA. Positions 12, 15, 32, and 35 each coordinate Zn(2+). Disordered stretches follow at residues 59-89 and 318-345; these read DVDH…HMSS and PTAG…REET. A compositionally biased stretch (low complexity) spans 71–83; sequence TAATSAAGSLSAA.

This sequence belongs to the TFIIB family. In terms of assembly, monomer. Interacts with RNA polymerase II subunits RPB1 and RPB2. Interacts with TBP; the interaction is direct.

The protein localises to the nucleus. Its function is as follows. Specifically binds to the promoter of the spliced leader (SL) RNA gene and thus is essential for SLRNA transcription. The chain is Transcription initiation factor IIB from Trypanosoma brucei brucei.